The following is a 317-amino-acid chain: Olfactory receptor 5AP2 (317 aa).

Topologically, residues 1–32 are extracellular; sequence MVRSGKGIQNKNATEVTEFILLGLSDNPDLQG. Residue N12 is glycosylated (N-linked (GlcNAc...) asparagine). The helical transmembrane segment at 33–53 threads the bilayer; the sequence is VLFALFLIIYTMTLVGNLGMM. Residues 54 to 61 lie on the Cytoplasmic side of the membrane; the sequence is ALIKIDRS. Residues 62–82 traverse the membrane as a helical segment; sequence LHTPMYFFLSSLSFVDASYSS. Over 83–106 the chain is Extracellular; the sequence is SVTPKMLVNLMAEDKSISFNGCAT. A disulfide bridge links C104 with C196. A helical transmembrane segment spans residues 107–127; that stretch reads QFFFFGSFLGTECFLLAMMAY. Residues 128 to 140 are Cytoplasmic-facing; it reads DRYAAIWNPLLYP. Residues 141–161 traverse the membrane as a helical segment; sequence VLMSGRICFMLVSTSFLAGFG. Residues 162–203 are Extracellular-facing; it reads NAAIHTGMTFRLSFCGSNKINHFYCDTPPLLKLSCSDTHING. A helical membrane pass occupies residues 204–224; that stretch reads IVIMAFSSFNVISCVLIVLIS. The Cytoplasmic portion of the chain corresponds to 225 to 244; sequence YLCILIAILKMPSAEGRHKA. Residues 245 to 265 form a helical membrane-spanning segment; sequence FSTCASHLMAVTIFFGTILFM. Residues 266 to 278 lie on the Extracellular side of the membrane; it reads YLRPTSSYSMEQD. A helical membrane pass occupies residues 279–299; it reads KVVSVFYTVVIPMLNPLIYSL. Residues 300–317 lie on the Cytoplasmic side of the membrane; the sequence is KNKDVKKAVKKILHNYVV.

Belongs to the G-protein coupled receptor 1 family.

It is found in the cell membrane. Functionally, odorant receptor. This is Olfactory receptor 5AP2 from Mus musculus (Mouse).